A 276-amino-acid chain; its full sequence is 4-deoxy-L-threo-5-hexosulose-uronate ketol-isomerase 1 (276 aa).

Residues His-194, His-196, Glu-201, and His-243 each contribute to the Zn(2+) site.

This sequence belongs to the KduI family. It depends on Zn(2+) as a cofactor.

It catalyses the reaction 5-dehydro-4-deoxy-D-glucuronate = 3-deoxy-D-glycero-2,5-hexodiulosonate. It functions in the pathway glycan metabolism; pectin degradation; 2-dehydro-3-deoxy-D-gluconate from pectin: step 4/5. Functionally, catalyzes the isomerization of 5-dehydro-4-deoxy-D-glucuronate to 3-deoxy-D-glycero-2,5-hexodiulosonate. The protein is 4-deoxy-L-threo-5-hexosulose-uronate ketol-isomerase 1 (kduI1) of Enterococcus faecalis (strain ATCC 700802 / V583).